The sequence spans 130 residues: B1 protein (130 aa).

An N-terminal signal peptide occupies residues 1–12 (LTSLILLVAVQA). Cystine bridges form between Cys28–Cys59 and Cys99–Cys116.

It belongs to the PBP/GOBP family. Post-translationally, N-glycosylated. As to expression, tubular accessory sex gland.

It localises to the secreted. May be a carrier protein for lipids. This chain is B1 protein, found in Tenebrio molitor (Yellow mealworm beetle).